The sequence spans 124 residues: Small ribosomal subunit protein uS13 (124 aa).

Residues 87–124 (GSYRGNRHRKRLPVRGQRTKTNSRTRKGKRRTVGSKTK) are disordered. Over residues 91–124 (GNRHRKRLPVRGQRTKTNSRTRKGKRRTVGSKTK) the composition is skewed to basic residues.

Belongs to the universal ribosomal protein uS13 family. Part of the 30S ribosomal subunit. Forms a loose heterodimer with protein S19. Forms two bridges to the 50S subunit in the 70S ribosome.

Located at the top of the head of the 30S subunit, it contacts several helices of the 16S rRNA. In the 70S ribosome it contacts the 23S rRNA (bridge B1a) and protein L5 of the 50S subunit (bridge B1b), connecting the 2 subunits; these bridges are implicated in subunit movement. Contacts the tRNAs in the A and P-sites. This is Small ribosomal subunit protein uS13 from Elusimicrobium minutum (strain Pei191).